The following is a 147-amino-acid chain: MFKIIVSFFCDHVFLSVIWLISCVLMIFFTLKDILFCTQFISIMKLIRCINYDRCLLIIDARTEKCFLKGHIINSVNIPYIDVKSVCNISVFKKYKNFSIVIVFKNDNQIDRNYVNFFKSIGCNKIYILRGGMNGWLSNNYPTVCLK.

The 94-residue stretch at tyrosine 52–cysteine 145 folds into the Rhodanese domain.

This is an uncharacterized protein from Buchnera aphidicola subsp. Baizongia pistaciae (strain Bp).